Consider the following 186-residue polypeptide: uncharacterized protein (186 aa).

The signal sequence occupies residues 1–21 (MIHVKYIILGFIMVSSLNLYA).

This is an uncharacterized protein from Rickettsia conorii (strain ATCC VR-613 / Malish 7).